A 327-amino-acid polypeptide reads, in one-letter code: GMP reductase (327 aa).

The Thioimidate intermediate role is filled by Cys-175. Position 204 to 227 (204 to 227 (IIADGGIRTHGDVAKSIRFGATMV)) interacts with NADP(+).

Belongs to the IMPDH/GMPR family. GuaC type 2 subfamily.

It catalyses the reaction IMP + NH4(+) + NADP(+) = GMP + NADPH + 2 H(+). Functionally, catalyzes the irreversible NADPH-dependent deamination of GMP to IMP. It functions in the conversion of nucleobase, nucleoside and nucleotide derivatives of G to A nucleotides, and in maintaining the intracellular balance of A and G nucleotides. In Bacillus thuringiensis subsp. konkukian (strain 97-27), this protein is GMP reductase.